The sequence spans 390 residues: Putative F-box protein At3g52320 (390 aa).

The F-box domain occupies 21 to 71 (VVFLPEIPEEMLIDILIRLPAKSLMRFKCVSKLWLSLITSRYFTNRFFKPS).

The sequence is that of Putative F-box protein At3g52320 from Arabidopsis thaliana (Mouse-ear cress).